We begin with the raw amino-acid sequence, 612 residues long: uncharacterized protein (612 aa).

This is an uncharacterized protein from Rickettsia prowazekii (strain Madrid E).